Here is a 253-residue protein sequence, read N- to C-terminus: Distal tail protein (253 aa).

In terms of assembly, homohexamer.

It is found in the virion. Functionally, forms a 40 Angstroms wide channel at the distal tip of the tail. Remains associated to the tail after DNA ejection. This chain is Distal tail protein, found in Bacillus phage SPP1 (Bacteriophage SPP1).